The primary structure comprises 153 residues: Protein C (153 aa).

The disordered stretch occupies residues 16 to 42 (SSETLTLLSNQEPLSMQDPPLVRSSTR). Polar residues predominate over residues 18-29 (ETLTLLSNQEPL).

This is Protein C (P/V/C) from Tupaia paramyxovirus (TPMV).